We begin with the raw amino-acid sequence, 294 residues long: Nucleotide-binding protein Dde_1774 (294 aa).

An ATP-binding site is contributed by 14–21 (GLSGAGKS). 66–69 (DLRQ) is a GTP binding site.

It belongs to the RapZ-like family.

In terms of biological role, displays ATPase and GTPase activities. This chain is Nucleotide-binding protein Dde_1774, found in Oleidesulfovibrio alaskensis (strain ATCC BAA-1058 / DSM 17464 / G20) (Desulfovibrio alaskensis).